Consider the following 181-residue polypeptide: ATP synthase subunit delta (181 aa).

This sequence belongs to the ATPase delta chain family. F-type ATPases have 2 components, F(1) - the catalytic core - and F(0) - the membrane proton channel. F(1) has five subunits: alpha(3), beta(3), gamma(1), delta(1), epsilon(1). F(0) has three main subunits: a(1), b(2) and c(10-14). The alpha and beta chains form an alternating ring which encloses part of the gamma chain. F(1) is attached to F(0) by a central stalk formed by the gamma and epsilon chains, while a peripheral stalk is formed by the delta and b chains.

Its subcellular location is the cell membrane. Its function is as follows. F(1)F(0) ATP synthase produces ATP from ADP in the presence of a proton or sodium gradient. F-type ATPases consist of two structural domains, F(1) containing the extramembraneous catalytic core and F(0) containing the membrane proton channel, linked together by a central stalk and a peripheral stalk. During catalysis, ATP synthesis in the catalytic domain of F(1) is coupled via a rotary mechanism of the central stalk subunits to proton translocation. Functionally, this protein is part of the stalk that links CF(0) to CF(1). It either transmits conformational changes from CF(0) to CF(1) or is implicated in proton conduction. The sequence is that of ATP synthase subunit delta from Bacillus velezensis (strain DSM 23117 / BGSC 10A6 / LMG 26770 / FZB42) (Bacillus amyloliquefaciens subsp. plantarum).